A 71-amino-acid chain; its full sequence is MVPPVQVSPLIKLGRYSALFLGMAYGAKRYNYLKPRAEEERRLAAEEKKKRDEQKRIERELAEAQEDTILK.

Lys34 carries the N6-acetyllysine modification.

This sequence belongs to the ATPase e subunit family. As to quaternary structure, component of the ATP synthase complex composed at least of ATP5F1A/subunit alpha, ATP5F1B/subunit beta, ATP5MC1/subunit c (homooctomer), MT-ATP6/subunit a, MT-ATP8/subunit 8, ATP5ME/subunit e, ATP5MF/subunit f, ATP5MG/subunit g, ATP5MK/subunit k, ATP5MJ/subunit j, ATP5F1C/subunit gamma, ATP5F1D/subunit delta, ATP5F1E/subunit epsilon, ATP5PF/subunit F6, ATP5PB/subunit b, ATP5PD/subunit d, ATP5PO/subunit OSCP. ATP synthase complex consists of a soluble F(1) head domain (subunits alpha(3) and beta(3)) - the catalytic core - and a membrane F(0) domain - the membrane proton channel (subunits c, a, 8, e, f, g, k and j). These two domains are linked by a central stalk (subunits gamma, delta, and epsilon) rotating inside the F1 region and a stationary peripheral stalk (subunits F6, b, d, and OSCP).

The protein localises to the mitochondrion. It localises to the mitochondrion inner membrane. Subunit e, of the mitochondrial membrane ATP synthase complex (F(1)F(0) ATP synthase or Complex V) that produces ATP from ADP in the presence of a proton gradient across the membrane which is generated by electron transport complexes of the respiratory chain. ATP synthase complex consist of a soluble F(1) head domain - the catalytic core - and a membrane F(1) domain - the membrane proton channel. These two domains are linked by a central stalk rotating inside the F(1) region and a stationary peripheral stalk. During catalysis, ATP synthesis in the catalytic domain of F(1) is coupled via a rotary mechanism of the central stalk subunits to proton translocation. In vivo, can only synthesize ATP although its ATP hydrolase activity can be activated artificially in vitro. Part of the complex F(0) domain. The protein is ATP synthase F(0) complex subunit e, mitochondrial of Bos taurus (Bovine).